A 348-amino-acid polypeptide reads, in one-letter code: MDEAPRIAIDAMGGDGGPATIIAGAAQARDRDSSLRLTFTGDETVIRAEMARFPQLADSIVVHCDDVITGDDKPSQAIRRTKSSSMGAAILAVKAGEAAAALSAGNTGALMAIAKLSLRTMHGIDRPALAALMPTLGDNDLVMLDLGANTDCDARNLVEFAVMGAAYSRLALGIESPRVRLLNIGTEELKGTGELKEAAAMLRQQTGGAWRFDGFIEADRLGRGEADVIVSDGFSGNIALKSIEGTARFITDLLRRAFSSSLRSKAGFILSRPAFALLRHHLDPNNHNGAVFLGLNGLVVKSHGGADEKGIANAIAVAAKIAREDLTRRITDDLEDFRSHAVQTEGVA.

This sequence belongs to the PlsX family. As to quaternary structure, homodimer. Probably interacts with PlsY.

Its subcellular location is the cytoplasm. The enzyme catalyses a fatty acyl-[ACP] + phosphate = an acyl phosphate + holo-[ACP]. The protein operates within lipid metabolism; phospholipid metabolism. In terms of biological role, catalyzes the reversible formation of acyl-phosphate (acyl-PO(4)) from acyl-[acyl-carrier-protein] (acyl-ACP). This enzyme utilizes acyl-ACP as fatty acyl donor, but not acyl-CoA. This Rhizorhabdus wittichii (strain DSM 6014 / CCUG 31198 / JCM 15750 / NBRC 105917 / EY 4224 / RW1) (Sphingomonas wittichii) protein is Phosphate acyltransferase.